The sequence spans 329 residues: DNA-directed RNA polymerase subunit alpha (329 aa).

The interval 1-235 is alpha N-terminal domain (alpha-NTD); sequence MQGSVTEFLK…EQLDAFVDLR (235 aa). The interval 249 to 329 is alpha C-terminal domain (alpha-CTD); it reads FDPILLRPVD…NWPPASIAED (81 aa).

The protein belongs to the RNA polymerase alpha chain family. In terms of assembly, homodimer. The RNAP catalytic core consists of 2 alpha, 1 beta, 1 beta' and 1 omega subunit. When a sigma factor is associated with the core the holoenzyme is formed, which can initiate transcription.

The enzyme catalyses RNA(n) + a ribonucleoside 5'-triphosphate = RNA(n+1) + diphosphate. DNA-dependent RNA polymerase catalyzes the transcription of DNA into RNA using the four ribonucleoside triphosphates as substrates. The sequence is that of DNA-directed RNA polymerase subunit alpha from Aliivibrio salmonicida (strain LFI1238) (Vibrio salmonicida (strain LFI1238)).